The sequence spans 251 residues: Imidazole glycerol phosphate synthase subunit HisF (251 aa).

Catalysis depends on residues Asp11 and Asp130.

It belongs to the HisA/HisF family. In terms of assembly, heterodimer of HisH and HisF.

Its subcellular location is the cytoplasm. The catalysed reaction is 5-[(5-phospho-1-deoxy-D-ribulos-1-ylimino)methylamino]-1-(5-phospho-beta-D-ribosyl)imidazole-4-carboxamide + L-glutamine = D-erythro-1-(imidazol-4-yl)glycerol 3-phosphate + 5-amino-1-(5-phospho-beta-D-ribosyl)imidazole-4-carboxamide + L-glutamate + H(+). The protein operates within amino-acid biosynthesis; L-histidine biosynthesis; L-histidine from 5-phospho-alpha-D-ribose 1-diphosphate: step 5/9. Its function is as follows. IGPS catalyzes the conversion of PRFAR and glutamine to IGP, AICAR and glutamate. The HisF subunit catalyzes the cyclization activity that produces IGP and AICAR from PRFAR using the ammonia provided by the HisH subunit. This chain is Imidazole glycerol phosphate synthase subunit HisF, found in Chlorobium limicola (strain DSM 245 / NBRC 103803 / 6330).